Reading from the N-terminus, the 509-residue chain is Steroid 17-alpha-hydroxylase/17,20 lyase (509 aa).

Cys-440 provides a ligand contact to heme.

It belongs to the cytochrome P450 family. The cofactor is heme.

The protein localises to the endoplasmic reticulum membrane. The protein resides in the microsome membrane. The catalysed reaction is a C21-steroid + reduced [NADPH--hemoprotein reductase] + O2 = a 17alpha-hydroxy-C21-steroid + oxidized [NADPH--hemoprotein reductase] + H2O + H(+). The enzyme catalyses progesterone + reduced [NADPH--hemoprotein reductase] + O2 = 17alpha-hydroxyprogesterone + oxidized [NADPH--hemoprotein reductase] + H2O + H(+). It catalyses the reaction pregnenolone + reduced [NADPH--hemoprotein reductase] + O2 = 17alpha-hydroxypregnenolone + oxidized [NADPH--hemoprotein reductase] + H2O + H(+). It carries out the reaction 17alpha-hydroxyprogesterone + reduced [NADPH--hemoprotein reductase] + O2 = androst-4-ene-3,17-dione + acetate + oxidized [NADPH--hemoprotein reductase] + H2O + 2 H(+). The catalysed reaction is 17alpha-hydroxyprogesterone + reduced [NADPH--hemoprotein reductase] + O2 = 16alpha,17alpha-dihydroxyprogesterone + oxidized [NADPH--hemoprotein reductase] + H2O + H(+). The enzyme catalyses 16alpha,17alpha-dihydroxyprogesterone + reduced [NADPH--hemoprotein reductase] + O2 = 6beta,16alpha,17alpha-trihydroxyprogesterone + oxidized [NADPH--hemoprotein reductase] + H2O + H(+). It catalyses the reaction 17alpha-hydroxypregnenolone + reduced [NADPH--hemoprotein reductase] + O2 = 3beta-hydroxyandrost-5-en-17-one + acetate + oxidized [NADPH--hemoprotein reductase] + H2O + 2 H(+). It carries out the reaction 16alpha,17alpha-dihydroxypregnenolone + reduced [NADPH--hemoprotein reductase] + O2 = 3beta,16alpha-dihydroxy-androst-5-en-17-one + acetate + oxidized [NADPH--hemoprotein reductase] + H2O + 2 H(+). The catalysed reaction is 3beta-hydroxyandrost-5-en-17-one + reduced [NADPH--hemoprotein reductase] + O2 = 3beta,16alpha-dihydroxy-androst-5-en-17-one + oxidized [NADPH--hemoprotein reductase] + H2O + H(+). The enzyme catalyses androst-4-ene-3,17-dione + reduced [NADPH--hemoprotein reductase] + O2 = 16alpha-hydroxyandrost-4-ene-3,17-dione + oxidized [NADPH--hemoprotein reductase] + H2O + H(+). It functions in the pathway steroid hormone biosynthesis. The protein operates within steroid biosynthesis; glucocorticoid biosynthesis. Regulated predominantly by intracellular cAMP levels. The 17,20-lyase activity is stimulated by cytochrome b5, which acts as an allosteric effector increasing the Vmax of the lyase activity. A cytochrome P450 monooxygenase involved in corticoid and androgen biosynthesis. Catalyzes 17-alpha hydroxylation of C21 steroids, which is common for both pathways. A second oxidative step, required only for androgen synthesis, involves an acyl-carbon cleavage. The 17-alpha hydroxy intermediates, as part of adrenal glucocorticoids biosynthesis pathway, are precursors of cortisol. Hydroxylates steroid hormones, pregnenolone and progesterone to form 17-alpha hydroxy metabolites, followed by the cleavage of the C17-C20 bond to form C19 steroids, dehydroepiandrosterone (DHEA) and androstenedione. Has 16-alpha hydroxylase activity. Catalyzes 16-alpha hydroxylation of 17-alpha hydroxy pregnenolone, followed by the cleavage of the C17-C20 bond to form 16-alpha-hydroxy DHEA. Also 16-alpha hydroxylates androgens, relevant for estriol synthesis. Mechanistically, uses molecular oxygen inserting one oxygen atom into a substrate, and reducing the second into a water molecule, with two electrons provided by NADPH via cytochrome P450 reductase (CPR; NADPH-ferrihemoprotein reductase). In Peromyscus leucopus (White-footed mouse), this protein is Steroid 17-alpha-hydroxylase/17,20 lyase (Cyp17a1).